The chain runs to 196 residues: Putative 3-methyladenine DNA glycosylase (196 aa).

Belongs to the DNA glycosylase MPG family.

This Chlamydia pneumoniae (Chlamydophila pneumoniae) protein is Putative 3-methyladenine DNA glycosylase.